We begin with the raw amino-acid sequence, 330 residues long: Endo-1,4-beta-xylanase (330 aa).

Residues 2–330 (CSSIPSLREV…KPAFWRVVNI (329 aa)) form the GH10 domain. Residue glutamate 133 is the Proton donor of the active site. Residue glutamate 240 is the Nucleophile of the active site.

Belongs to the glycosyl hydrolase 10 (cellulase F) family. Cytoplasmic xylanase subfamily.

The protein localises to the cytoplasm. The catalysed reaction is Endohydrolysis of (1-&gt;4)-beta-D-xylosidic linkages in xylans.. The protein operates within glycan degradation; xylan degradation. This is Endo-1,4-beta-xylanase (xynA) from Geobacillus stearothermophilus (Bacillus stearothermophilus).